Reading from the N-terminus, the 374-residue chain is 4-hydroxybenzoate polyprenyltransferase, mitochondrial (374 aa).

The transit peptide at 1–63 (MLRLGGAGLV…RALSLSAAAV (63 aa)) directs the protein to the mitochondrion. Residues 64–83 (VNSAPRPLQPYLRLMRLDKP) are Mitochondrial matrix-facing. A helical membrane pass occupies residues 84 to 104 (IGTWLLYLPCTWSIGLAADPG). Topologically, residues 105–108 (CFPD) are mitochondrial intermembrane. Residues 109-129 (WYMLSLFGTGAILMRGAGCTI) traverse the membrane as a helical segment. Residues 130 to 153 (NDMWDRDFDKKVERTANRPIAAGD) lie on the Mitochondrial matrix side of the membrane. Residues 154-174 (ISAFQSFVFLGAQLTLALGVL) traverse the membrane as a helical segment. The Mitochondrial intermembrane portion of the chain corresponds to 175–176 (LH). The helical transmembrane segment at 177–197 (LNYYSIAMGAASLLLVVTYPL) threads the bilayer. Topologically, residues 198–200 (MKR) are mitochondrial matrix. The chain crosses the membrane as a helical span at residues 201-221 (VTFWPQLALGLTFNWGALLGW). At 222 to 230 (SAVKGSCDP) the chain is on the mitochondrial intermembrane side. Residues 231–251 (AVCLPLYFSGVMWTLIYDTIY) traverse the membrane as a helical segment. Residues 252–277 (AHQDKKDDALIGLKSTALLFRENTKQ) lie on the Mitochondrial matrix side of the membrane. A helical membrane pass occupies residues 278-298 (WLSGFGVAMVGALSLVGASSG). The Mitochondrial intermembrane segment spans residues 299 to 300 (QT). The helical transmembrane segment at 301–321 (LPYYAAVAAVGAHLAHQIYTV) threads the bilayer. The Mitochondrial matrix portion of the chain corresponds to 322–332 (DIHRAEDCWEK). Residues 333-353 (FTSNRTVGLLLFLGIVLGNLY) traverse the membrane as a helical segment. Over 354–374 (KDKPDETKGVDAVGEESERTS) the chain is Mitochondrial intermembrane.

It belongs to the UbiA prenyltransferase family. Mg(2+) serves as cofactor.

The protein resides in the mitochondrion inner membrane. It carries out the reaction an all-trans-polyprenyl diphosphate + 4-hydroxybenzoate = a 4-hydroxy-3-(all-trans-polyprenyl)benzoate + diphosphate. The enzyme catalyses all-trans-decaprenyl diphosphate + 4-hydroxybenzoate = 4-hydroxy-3-(all-trans-decaprenyl)benzoate + diphosphate. It catalyses the reaction all-trans-nonaprenyl diphosphate + 4-hydroxybenzoate = 4-hydroxy-3-(all-trans-nonaprenyl)benzoate + diphosphate. It participates in cofactor biosynthesis; ubiquinone biosynthesis. In terms of biological role, mediates the second step in the final reaction sequence of coenzyme Q (CoQ) biosynthesis. Catalyzes the prenylation of para-hydroxybenzoate (PHB) with an all-trans polyprenyl group (such as all-trans-nonaprenyl diphosphate). The length of the polyprenyl side chain varies depending on the species, in humans, the side chain is comprised of 10 isoprenyls producing CoQ10 (also known as ubiquinone), whereas rodents predominantly generate CoQ9. However, this specificity is not complete, human tissues have low amounts of CoQ9 and rodent organs contain some CoQ10. Plays a central role in the biosynthesis of CoQ9. CoQ9 is a vital molecule that transports electrons from mitochondrial respiratory chain complexes. CoQs also function as cofactors for uncoupling protein and plays a role as regulator of the extracellularly-induced ceramide-dependent apoptotic pathway. Regulates mitochondrial permeability transition pore (mPTP) opening and ROS production (pivotal events in cell death) in a tissue specific manner. The protein is 4-hydroxybenzoate polyprenyltransferase, mitochondrial of Rattus norvegicus (Rat).